A 537-amino-acid chain; its full sequence is MMASTTSATAAGGAFAAAKTRAGSSAAGGGACARVAAGGRRRSGVVVRCDAGVEAQAQAQAVAKAASVAALEQFKISADRYMKERSSIAVIGLSVHTAPVEMREKLAVAEELWPRAISELTSLNHIEEAAVLSTCNRMEIYVVALSWNRGIREVVDWMSKKSGIPASELREHLFMLRDSDATRHLFEVSAGLDSLVLGEGQILAQVKQVVRSGQNSGGLGKNIDRMFKDAITAGKRVRCETNISSGAVSVSSAAVELALMKLPKSECLSARMLLIGAGKMGKLVVKHLIAKGCKKVVVVNRSVERVDAIREEMKDIEIVYRPLTEMYEAAAEADVVFTSTASETPLFTKEHAEALPAISDAMGGVRLFVDISVPRNVSACVSEVGHARVYNVDDLKEVVEANKEDRLRKAMEAQTIITQELKRFEAWRDSLETVPTIKKLRSYADRIRASELEKCLQKIGEDSLTKKMRRSIEELSTGIVNKLLHGPLQHLRCDGSDSRTLDETLENMHALNRMFSLDTEKAIIEQKIKAKVEKSQN.

The transit peptide at 1–48 directs the protein to the chloroplast; the sequence is MMASTTSATAAGGAFAAAKTRAGSSAAGGGACARVAAGGRRRSGVVVR. Residues 134–137, Ser-194, 199–201, and Gln-205 contribute to the substrate site; these read TCNR and EGQ. Residue Cys-135 is the Nucleophile of the active site. 276-281 is a binding site for NADP(+); sequence GAGKMG.

This sequence belongs to the glutamyl-tRNA reductase family.

The protein resides in the plastid. The protein localises to the chloroplast. It carries out the reaction (S)-4-amino-5-oxopentanoate + tRNA(Glu) + NADP(+) = L-glutamyl-tRNA(Glu) + NADPH + H(+). Its pathway is porphyrin-containing compound metabolism; protoporphyrin-IX biosynthesis; 5-aminolevulinate from L-glutamyl-tRNA(Glu): step 1/2. Functionally, catalyzes the NADPH-dependent reduction of glutamyl-tRNA(Glu) to glutamate 1-semialdehyde (GSA). This is Glutamyl-tRNA reductase, chloroplastic from Oryza sativa subsp. indica (Rice).